Reading from the N-terminus, the 34-residue chain is Photosystem II reaction center protein M (34 aa).

A helical transmembrane segment spans residues 5–25 (ILAVIATALFVLIPTAFLLIL).

It belongs to the PsbM family. As to quaternary structure, PSII is composed of 1 copy each of membrane proteins PsbA, PsbB, PsbC, PsbD, PsbE, PsbF, PsbH, PsbI, PsbJ, PsbK, PsbL, PsbM, PsbT, PsbX, PsbY, PsbZ, Psb30/Ycf12, at least 3 peripheral proteins of the oxygen-evolving complex and a large number of cofactors. It forms dimeric complexes.

It localises to the plastid. It is found in the chloroplast thylakoid membrane. Functionally, one of the components of the core complex of photosystem II (PSII). PSII is a light-driven water:plastoquinone oxidoreductase that uses light energy to abstract electrons from H(2)O, generating O(2) and a proton gradient subsequently used for ATP formation. It consists of a core antenna complex that captures photons, and an electron transfer chain that converts photonic excitation into a charge separation. This subunit is found at the monomer-monomer interface. The sequence is that of Photosystem II reaction center protein M from Chaetosphaeridium globosum (Charophycean green alga).